The following is a 247-amino-acid chain: DNA polymerase sliding clamp 1 (247 aa).

It belongs to the PCNA family. Heterotrimer. The subunits circularize to form a toroid; DNA passes through its center. Replication factor C (RFC) is required to load the toroid on the DNA.

In terms of biological role, sliding clamp subunit that acts as a moving platform for DNA processing. Responsible for tethering the catalytic subunit of DNA polymerase and other proteins to DNA during high-speed replication. This Aeropyrum pernix (strain ATCC 700893 / DSM 11879 / JCM 9820 / NBRC 100138 / K1) protein is DNA polymerase sliding clamp 1.